The sequence spans 422 residues: MAAADTCGAGTLSSRSVASEAGQGGTSSFQRKGKASGGPGGGPRLLSIAGTRPSVRNGQLLVSTGLPALDQLLGGGLAVGTLLLIEEDKYNIYSPLLFKYFMAEGIINGHTLLVASAKENPAKILQELPAPLLDDNSKKELEDVHSAKTPEPNVNMKIAWRYQLQPKMEVGPVSSSRFGHYYDLSKRIPWELLQSSKWHGFFLPEHISPDLKGESCFLSCGYMRLLEFIQKSVYAEGFDGANPQKKQKNILRIGIQNLGSPLWGDDICCKENCDNNHRLTKFLYILRGLLRSSLSACIITMPAHLVQNKSITTRVRNLSDTVVGLESFIGSERETNPLYKDYHGLIHIRKIPRLNNLTCDESDVKDLAFKLKRKLFTIERLHLPPDLSDTVGRSSKQDLAASTARLGAGCSSMAEGKKHLDF.

A disordered region spans residues 1-49 (MAAADTCGAGTLSSRSVASEAGQGGTSSFQRKGKASGGPGGGPRLLSIA).

The protein belongs to the ELP4 family. Component of the elongator complex which consists of ELP1, ELP2, ELP3, ELP4, ELP5 and ELP6. In terms of tissue distribution, expressed throughout the cerebellum.

Its subcellular location is the cytoplasm. The protein localises to the nucleus. It functions in the pathway tRNA modification; 5-methoxycarbonylmethyl-2-thiouridine-tRNA biosynthesis. In terms of biological role, component of the elongator complex which is required for multiple tRNA modifications, including mcm5U (5-methoxycarbonylmethyl uridine), mcm5s2U (5-methoxycarbonylmethyl-2-thiouridine), and ncm5U (5-carbamoylmethyl uridine). The elongator complex catalyzes the formation of carboxymethyluridine in the wobble base at position 34 in tRNAs. This Mus musculus (Mouse) protein is Elongator complex protein 4 (Elp4).